The following is a 20-amino-acid chain: Antifungal protein 2 large subunit (20 aa).

The disordered stretch occupies residues 1–20 (PEDPQRRYQEXQREXRXQQE).

As to quaternary structure, heterodimer of a large and a small subunit.

Possesses antifungal activity against P.infestans but not F.graminearum. This chain is Antifungal protein 2 large subunit, found in Malva parviflora (Little mallow).